A 1374-amino-acid polypeptide reads, in one-letter code: DNA-directed RNA polymerase subunit beta (1374 aa).

This sequence belongs to the RNA polymerase beta chain family. In terms of assembly, the RNAP catalytic core consists of 2 alpha, 1 beta, 1 beta' and 1 omega subunit. When a sigma factor is associated with the core the holoenzyme is formed, which can initiate transcription.

It carries out the reaction RNA(n) + a ribonucleoside 5'-triphosphate = RNA(n+1) + diphosphate. In terms of biological role, DNA-dependent RNA polymerase catalyzes the transcription of DNA into RNA using the four ribonucleoside triphosphates as substrates. This chain is DNA-directed RNA polymerase subunit beta, found in Methylobacterium nodulans (strain LMG 21967 / CNCM I-2342 / ORS 2060).